Reading from the N-terminus, the 453-residue chain is Exopolyphosphatase PRUNE1 (453 aa).

At Met1 the chain carries N-acetylmethionine. The Mn(2+) site is built by Asp28, Asp30, Asp106, and Asp179. The short motif at 106-108 (DHH) is the DHH motif element. Residues 393–420 (SLLSGLSQDEEEPPLPPTPMNSLVDECP) are essential for homodimerization. Residues 396-419 (SGLSQDEEEPPLPPTPMNSLVDEC) are disordered. At Ser399 the chain carries Phosphoserine. Residue Thr410 is modified to Phosphothreonine. Ser414 bears the Phosphoserine mark.

The protein belongs to the PPase class C family. Prune subfamily. Homooligomer. Able to homodimerize via its C-terminal domain. Interacts with NME1. Interacts with GSK3; at focal adhesion complexes where paxillin and vinculin are colocalized. Mn(2+) is required as a cofactor.

It is found in the cytoplasm. The protein resides in the nucleus. It localises to the cell junction. Its subcellular location is the focal adhesion. The catalysed reaction is diphosphate + H2O = 2 phosphate + H(+). Its activity is regulated as follows. Activated by magnesium ions and inhibited by manganese ions. Inhibited by dipyridamole, moderately sensitive to IBMX and inhibited by vinpocetine. Functionally, phosphodiesterase (PDE) that has higher activity toward cAMP than cGMP, as substrate. Plays a role in cell proliferation, is able to induce cell motility and acts as a negative regulator of NME1. The protein is Exopolyphosphatase PRUNE1 (PRUNE1) of Bos taurus (Bovine).